Here is a 151-residue protein sequence, read N- to C-terminus: UPF0208 membrane protein YE1335 (151 aa).

2 helical membrane-spanning segments follow: residues 46–66 and 69–89; these read FGIR…IALG and LGPA…GLWW.

This sequence belongs to the UPF0208 family.

The protein resides in the cell inner membrane. In Yersinia enterocolitica serotype O:8 / biotype 1B (strain NCTC 13174 / 8081), this protein is UPF0208 membrane protein YE1335.